Here is a 125-residue protein sequence, read N- to C-terminus: Glycine cleavage system H protein (125 aa).

The region spanning valine 23–arginine 105 is the Lipoyl-binding domain. Lysine 64 is modified (N6-lipoyllysine).

Belongs to the GcvH family. As to quaternary structure, the glycine cleavage system is composed of four proteins: P, T, L and H. The cofactor is (R)-lipoate.

The glycine cleavage system catalyzes the degradation of glycine. The H protein shuttles the methylamine group of glycine from the P protein to the T protein. This chain is Glycine cleavage system H protein, found in Streptomyces coelicolor (strain ATCC BAA-471 / A3(2) / M145).